The chain runs to 186 residues: Ribosome-recycling factor (186 aa).

This sequence belongs to the RRF family.

It localises to the cytoplasm. Functionally, responsible for the release of ribosomes from messenger RNA at the termination of protein biosynthesis. May increase the efficiency of translation by recycling ribosomes from one round of translation to another. In Paraburkholderia phymatum (strain DSM 17167 / CIP 108236 / LMG 21445 / STM815) (Burkholderia phymatum), this protein is Ribosome-recycling factor.